A 641-amino-acid chain; its full sequence is Protein GAMETE EXPRESSED 3 (641 aa).

The first 29 residues, 1 to 29 (MVAFRFVYIPLPFFFFFFFFFVFFSGVSQ), serve as a signal peptide directing secretion. Residues 441–461 (IIWFLLFEFVIMVLFAALVRF) form a helical membrane-spanning segment. Residues 570-627 (ITIFQTPSDESSSEESYRDEHYDDVADDEHDEDDLDRKQKGKLLAHSEGSSNDGDGIA) form a disordered region. Residues 584–593 (ESYRDEHYDD) show a composition bias toward basic and acidic residues. Positions 594-603 (VADDEHDEDD) are enriched in acidic residues.

In terms of tissue distribution, expressed in mature siliques and in pollen, mainly in the sperm cells. Detected in the egg cell within the female gametophyte.

It is found in the cell membrane. Functionally, required for micropylar pollen tube guidance. Plays a role during early embryo patterning. The chain is Protein GAMETE EXPRESSED 3 (GEX3) from Arabidopsis thaliana (Mouse-ear cress).